Reading from the N-terminus, the 552-residue chain is Putative transport protein HS_1470 (552 aa).

A run of 5 helical transmembrane segments spans residues 4–24 (IAIT…IGHW), 28–48 (GVGL…HFMN), 67–87 (LILF…ASLL), 95–115 (GLAT…YKVV), and 157–177 (MAYA…MWLI). 2 consecutive RCK C-terminal domains span residues 190–275 (KQFQ…VIGE) and 277–360 (IDMP…IIGN). 6 helical membrane-spanning segments follow: residues 370-390 (MLPV…PFYI), 402-424 (AGGP…LYWF), 438-458 (IVLF…DTLV), 463-483 (LEWM…TGII), 495-515 (LCGL…ANAI), and 529-549 (VYPL…ILLW).

The protein belongs to the AAE transporter (TC 2.A.81) family. YidE subfamily.

The protein resides in the cell membrane. The chain is Putative transport protein HS_1470 from Histophilus somni (strain 129Pt) (Haemophilus somnus).